The chain runs to 101 residues: Small ribosomal subunit protein uS14 (101 aa).

Residues 1–10 (MAKKSSIEKN) are compositionally biased toward basic and acidic residues. A disordered region spans residues 1-23 (MAKKSSIEKNNRRRRMNRNAAAK). Over residues 11–23 (NRRRRMNRNAAAK) the composition is skewed to basic residues.

It belongs to the universal ribosomal protein uS14 family. In terms of assembly, part of the 30S ribosomal subunit. Contacts proteins S3 and S10.

In terms of biological role, binds 16S rRNA, required for the assembly of 30S particles and may also be responsible for determining the conformation of the 16S rRNA at the A site. In Nitrobacter winogradskyi (strain ATCC 25391 / DSM 10237 / CIP 104748 / NCIMB 11846 / Nb-255), this protein is Small ribosomal subunit protein uS14.